An 881-amino-acid polypeptide reads, in one-letter code: Putative outer membrane usher protein YfcU (881 aa).

A signal peptide spans 1 to 29 (MPDHSLFRLRILPWCIALAMSGSYSSVWA).

It belongs to the fimbrial export usher family.

It is found in the cell outer membrane. Its function is as follows. Part of the yfcOPQRSUV fimbrial operon. Could contribute to adhesion to various surfaces in specific environmental niches. Increases adhesion to eukaryotic T24 bladder epithelial cells in the absence of fim genes. Probably involved in the export and assembly of fimbrial subunits across the outer membrane. The chain is Putative outer membrane usher protein YfcU (yfcU) from Escherichia coli (strain K12).